The sequence spans 859 residues: Valine--tRNA ligase (859 aa).

The 'HIGH' region motif lies at 46–56 (PTVSGQLHIGH). Positions 583–587 (KMSKS) match the 'KMSKS' region motif. Residue Lys586 coordinates ATP.

This sequence belongs to the class-I aminoacyl-tRNA synthetase family. ValS type 2 subfamily. In terms of assembly, monomer.

Its subcellular location is the cytoplasm. The enzyme catalyses tRNA(Val) + L-valine + ATP = L-valyl-tRNA(Val) + AMP + diphosphate. In terms of biological role, catalyzes the attachment of valine to tRNA(Val). As ValRS can inadvertently accommodate and process structurally similar amino acids such as threonine, to avoid such errors, it has a 'posttransfer' editing activity that hydrolyzes mischarged Thr-tRNA(Val) in a tRNA-dependent manner. The chain is Valine--tRNA ligase from Rickettsia felis (strain ATCC VR-1525 / URRWXCal2) (Rickettsia azadi).